The following is a 46-amino-acid chain: U2-plectoxin-Pt1a (46 aa).

Post-translationally, contains 4 disulfide bonds. In terms of tissue distribution, expressed by the venom gland.

It is found in the secreted. Functionally, potent toxin that may paralyze and/or kill insect pests such as H.virescens (lepidoptera), S.exigua (beet armyworm) and M.sexta (tobacco hornworm). The polypeptide is U2-plectoxin-Pt1a (Plectreurys tristis (Spider)).